The sequence spans 351 residues: N-terminal EF-hand calcium-binding protein 1 (351 aa).

A Phosphoserine modification is found at Ser4. EF-hand domains follow at residues 26–61 and 60–95; these read KGMS…GVLS and LSGE…HLGE. Ca(2+) is bound by residues Asp39, Asn41, Asp43, Lys45, and Glu50. A coiled-coil region spans residues 135-163; that stretch reads LLKETLNQLQSLQNSLECAMETTEEQTRQ. The disordered stretch occupies residues 180–203; sequence GKRSSRRVQRHNSFSPNSPQFNVS. The segment covering 190 to 202 has biased composition (polar residues); that stretch reads HNSFSPNSPQFNV. Phosphoserine occurs at positions 192 and 197. Positions 209 to 275 form a coiled coil; that stretch reads EEDNQWMTQI…EEFQLALKHY (67 aa). An ABM domain is found at 252-340; it reads MLVQRQMSVI…LETPELTSTM (89 aa).

Interacts with STX1. May interact with CPNE6. Expressed in brain (at protein level).

The protein localises to the cytoplasm. The polypeptide is N-terminal EF-hand calcium-binding protein 1 (NECAB1) (Homo sapiens (Human)).